The chain runs to 74 residues: uncharacterized protein (74 aa).

This is an uncharacterized protein from Methanocaldococcus jannaschii (strain ATCC 43067 / DSM 2661 / JAL-1 / JCM 10045 / NBRC 100440) (Methanococcus jannaschii).